We begin with the raw amino-acid sequence, 481 residues long: Glutamyl-tRNA(Gln) amidotransferase subunit A (481 aa).

Catalysis depends on charge relay system residues lysine 79 and serine 154. The interval 136 to 157 is disordered; sequence SAFGATKNPRNPEHVPGGSSGG. The Acyl-ester intermediate role is filled by serine 178.

Belongs to the amidase family. GatA subfamily. As to quaternary structure, heterotrimer of A, B and C subunits.

The catalysed reaction is L-glutamyl-tRNA(Gln) + L-glutamine + ATP + H2O = L-glutaminyl-tRNA(Gln) + L-glutamate + ADP + phosphate + H(+). Its function is as follows. Allows the formation of correctly charged Gln-tRNA(Gln) through the transamidation of misacylated Glu-tRNA(Gln) in organisms which lack glutaminyl-tRNA synthetase. The reaction takes place in the presence of glutamine and ATP through an activated gamma-phospho-Glu-tRNA(Gln). The chain is Glutamyl-tRNA(Gln) amidotransferase subunit A from Lachnospira eligens (strain ATCC 27750 / DSM 3376 / VPI C15-48 / C15-B4) (Eubacterium eligens).